The primary structure comprises 79 residues: Small ribosomal subunit protein bS18 (79 aa).

This sequence belongs to the bacterial ribosomal protein bS18 family. As to quaternary structure, part of the 30S ribosomal subunit. Forms a tight heterodimer with protein bS6.

Binds as a heterodimer with protein bS6 to the central domain of the 16S rRNA, where it helps stabilize the platform of the 30S subunit. This is Small ribosomal subunit protein bS18 from Onion yellows phytoplasma (strain OY-M).